The primary structure comprises 351 residues: D-glucoside 3-dehydrogenase (351 aa).

This sequence belongs to the Gfo/Idh/MocA family.

It catalyses the reaction a D-glucoside + NAD(+) = a 3-dehydro-D-glucoside + NADH + H(+). Catalyzes the NADH-dependent reduction of the oxo group at C3 of 3-dehydro-D-glucosides leading to D-glucosides. Probably functions in a metabolic pathway that transforms D-gulosides to D-glucosides. Can use 3-dehydro-D-glucose, methyl alpha-3-dehydro-D-glucoside and methyl beta-3-dehydro-D-glucoside as substrates in vitro. However, the actual specific physiological substrates for this metabolic pathway are unknown. To a lesser extent, is also able to catalyze the reverse reactions, i.e. the NAD(+)-dependent oxidation of the hydroxyl group at C3 of D-glucosides leading to 3-dehydro-D-glucosides. Cannot act on UDP-glucose, UDP-N-acetyl-D-glucosamine, D-glucosamine, N-acetyl-D-glucosamine, or UDP-D-galactose. The polypeptide is D-glucoside 3-dehydrogenase (ycjS) (Escherichia coli (strain K12)).